Consider the following 173-residue polypeptide: ATP synthase subunit b (173 aa).

The helical transmembrane segment at 12–32 threads the bilayer; the sequence is LDVNPGLVVWTLVTFLVVVLV.

This sequence belongs to the ATPase B chain family. As to quaternary structure, F-type ATPases have 2 components, F(1) - the catalytic core - and F(0) - the membrane proton channel. F(1) has five subunits: alpha(3), beta(3), gamma(1), delta(1), epsilon(1). F(0) has three main subunits: a(1), b(2) and c(10-14). The alpha and beta chains form an alternating ring which encloses part of the gamma chain. F(1) is attached to F(0) by a central stalk formed by the gamma and epsilon chains, while a peripheral stalk is formed by the delta and b chains.

It localises to the cell inner membrane. F(1)F(0) ATP synthase produces ATP from ADP in the presence of a proton or sodium gradient. F-type ATPases consist of two structural domains, F(1) containing the extramembraneous catalytic core and F(0) containing the membrane proton channel, linked together by a central stalk and a peripheral stalk. During catalysis, ATP synthesis in the catalytic domain of F(1) is coupled via a rotary mechanism of the central stalk subunits to proton translocation. Its function is as follows. Component of the F(0) channel, it forms part of the peripheral stalk, linking F(1) to F(0). This is ATP synthase subunit b from Leptospira interrogans serogroup Icterohaemorrhagiae serovar copenhageni (strain Fiocruz L1-130).